Consider the following 382-residue polypeptide: Serine/threonine-protein phosphatase 2A activator 2 (382 aa).

Positions 363–382 (SHKGVPTLGNRPGIKPIPFD) are disordered.

Belongs to the PTPA-type PPIase family.

Its subcellular location is the cytoplasm. It carries out the reaction [protein]-peptidylproline (omega=180) = [protein]-peptidylproline (omega=0). In terms of biological role, PPIases accelerate the folding of proteins. It catalyzes the cis-trans isomerization of proline imidic peptide bonds in oligopeptides. Acts as a regulatory subunit for PP2A-like phosphatases modulating their activity or substrate specificity, probably by inducing a conformational change in the catalytic subunit, a direct target of the PPIase. Can reactivate inactive phosphatase PP2A-phosphatase methylesterase complexes (PP2Ai) in presence of ATP and Mg(2+) by dissociating the inactive form from the complex. The sequence is that of Serine/threonine-protein phosphatase 2A activator 2 (RRD2) from Cryptococcus neoformans var. neoformans serotype D (strain B-3501A) (Filobasidiella neoformans).